Consider the following 149-residue polypeptide: FAD synthase (149 aa).

Residues 9–10 (TF), 14–17 (HPGH), N92, and Y119 contribute to the ATP site.

The protein belongs to the archaeal FAD synthase family. In terms of assembly, homodimer. Requires a divalent metal cation as cofactor.

The enzyme catalyses FMN + ATP + H(+) = FAD + diphosphate. The protein operates within cofactor biosynthesis; FAD biosynthesis; FAD from FMN: step 1/1. Functionally, catalyzes the transfer of the AMP portion of ATP to flavin mononucleotide (FMN) to produce flavin adenine dinucleotide (FAD) coenzyme. This Methanoculleus marisnigri (strain ATCC 35101 / DSM 1498 / JR1) protein is FAD synthase.